Here is a 215-residue protein sequence, read N- to C-terminus: ER lumen protein-retaining receptor B (215 aa).

A run of 6 helical transmembrane segments spans residues 6–26, 55–77, 98–118, 120–140, 149–169, and 178–198; these read LAGD…IHTI, FVSL…IVWY, WFLV…FTFL, VLWT…LVLL, LTGQ…LNWI, and FVHW…ADFF.

The protein belongs to the ERD2 family.

It localises to the golgi apparatus membrane. Its subcellular location is the endoplasmic reticulum membrane. Determines the specificity of the luminal endoplasmic reticulum protein retention system. Required for the retro-transport of calreticulin-3 (CRT3) from the Golgi to the ER. Specifically required for elongation factor Tu receptor (EFR) function in response to the pathogen-associated molecular pattern (PAMP) elf18. The protein is ER lumen protein-retaining receptor B (ERD2B) of Arabidopsis thaliana (Mouse-ear cress).